The chain runs to 829 residues: Periplasmic nitrate reductase (829 aa).

Positions 1 to 29 (MKMTRRAFVKANAAASAAAVAGITLPASA) form a signal peptide, tat-type signal. Positions 41–97 (ITWDKAPCRFCGTGCSVLVGTQNGKVVATQGDPEAPVNKGLNCIKGYFLSKIMYGQD) constitute a 4Fe-4S Mo/W bis-MGD-type domain. Cys-48, Cys-51, Cys-55, and Cys-83 together coordinate [4Fe-4S] cluster. Mo-bis(molybdopterin guanine dinucleotide) contacts are provided by residues Lys-85, Gln-152, Asn-177, Cys-181, 214-221 (WGSNMAEM), 245-249 (STYYH), 264-266 (QSD), Met-374, Gln-378, Asn-484, 510-511 (SD), Lys-533, Asp-560, and 718-727 (TGRVLEHWHT). A substrate-binding site is contributed by Phe-794. Asn-802 and Lys-819 together coordinate Mo-bis(molybdopterin guanine dinucleotide).

This sequence belongs to the prokaryotic molybdopterin-containing oxidoreductase family. NasA/NapA/NarB subfamily. In terms of assembly, component of the periplasmic nitrate reductase NapAB complex composed of NapA and NapB. Requires [4Fe-4S] cluster as cofactor. Mo-bis(molybdopterin guanine dinucleotide) serves as cofactor. Post-translationally, predicted to be exported by the Tat system. The position of the signal peptide cleavage has not been experimentally proven.

The protein localises to the periplasm. It carries out the reaction 2 Fe(II)-[cytochrome] + nitrate + 2 H(+) = 2 Fe(III)-[cytochrome] + nitrite + H2O. Functionally, catalytic subunit of the periplasmic nitrate reductase complex NapAB. Receives electrons from NapB and catalyzes the reduction of nitrate to nitrite. The polypeptide is Periplasmic nitrate reductase (Vibrio campbellii (strain ATCC BAA-1116)).